A 185-amino-acid chain; its full sequence is MAETAYVPRLRTEYDKSIRTQLTEKFGYGNVMQVPRLDKVVLNMGIGEAVNDRKKAEQAAADMALIAGQKPIITYSRVAISTFKLRENQPIGCKVTLRKAKMYEFIDRLITVALPRVRDFRGLNPKSFDGRGNYSLGIKEHIIFPEIDFDKSGESWGMDITVCTTARSDDEARALLTAFNFPFRQ.

This sequence belongs to the universal ribosomal protein uL5 family. As to quaternary structure, part of the 50S ribosomal subunit; part of the 5S rRNA/L5/L18/L25 subcomplex. Contacts the 5S rRNA and the P site tRNA. Forms a bridge to the 30S subunit in the 70S ribosome.

In terms of biological role, this is one of the proteins that bind and probably mediate the attachment of the 5S RNA into the large ribosomal subunit, where it forms part of the central protuberance. In the 70S ribosome it contacts protein S13 of the 30S subunit (bridge B1b), connecting the 2 subunits; this bridge is implicated in subunit movement. Contacts the P site tRNA; the 5S rRNA and some of its associated proteins might help stabilize positioning of ribosome-bound tRNAs. The protein is Large ribosomal subunit protein uL5 of Rhodopseudomonas palustris (strain BisB5).